The sequence spans 509 residues: Maturase K (509 aa).

This sequence belongs to the intron maturase 2 family. MatK subfamily.

It localises to the plastid. It is found in the chloroplast. Usually encoded in the trnK tRNA gene intron. Probably assists in splicing its own and other chloroplast group II introns. The protein is Maturase K of Atropa belladonna (Belladonna).